A 238-amino-acid polypeptide reads, in one-letter code: Cysteine-rich venom protein 2 (238 aa).

The N-terminal stretch at 1–19 (MIAFIVLLSLAAVLQQSSG) is a signal peptide. The region spanning 38 to 164 (VDKHNALRRS…STKYLYVCQY (127 aa)) is the SCP domain. Intrachain disulfides connect Cys75/Cys153, Cys92/Cys165, Cys148/Cys162, Cys184/Cys191, Cys187/Cys196, Cys200/Cys233, Cys209/Cys227, and Cys218/Cys231. A ShKT domain is found at 200–233 (CEYEDAYTNCNDLVKERKCQTEWIKSQCPATCFC).

It belongs to the CRISP family. In terms of tissue distribution, expressed by the venom gland.

It localises to the secreted. In terms of biological role, blocks contraction of smooth muscle elicited by high potassium-induced depolarization, but does not block caffeine-stimulated contraction. May target voltage-gated calcium channels (Cav) on smooth muscle. The chain is Cysteine-rich venom protein 2 from Hydrophis hardwickii (Hardwick's spine-bellied seasnake).